Consider the following 122-residue polypeptide: Large ribosomal subunit protein uL14 (122 aa).

It belongs to the universal ribosomal protein uL14 family. As to quaternary structure, part of the 50S ribosomal subunit. Forms a cluster with proteins L3 and L19. In the 70S ribosome, L14 and L19 interact and together make contacts with the 16S rRNA in bridges B5 and B8.

In terms of biological role, binds to 23S rRNA. Forms part of two intersubunit bridges in the 70S ribosome. The sequence is that of Large ribosomal subunit protein uL14 from Myxococcus xanthus (strain DK1622).